The chain runs to 158 residues: AP-1 complex subunit sigma-1A (158 aa).

S147 carries the phosphoserine modification.

This sequence belongs to the adaptor complexes small subunit family. Adaptor protein complex 1 (AP-1) is a heterotetramer composed of two large adaptins (gamma-type subunit AP1G1 and beta-type subunit AP1B1), a medium adaptin (mu-type subunit AP1M1 or AP1M2) and a small adaptin (sigma-type subunit AP1S1 or AP1S2 or AP1S3). As to expression, widely expressed.

The protein localises to the golgi apparatus. The protein resides in the cytoplasmic vesicle membrane. Its subcellular location is the membrane. It localises to the clathrin-coated pit. Functionally, subunit of clathrin-associated adaptor protein complex 1 that plays a role in protein sorting in the late-Golgi/trans-Golgi network (TGN) and/or endosomes. The AP complexes mediate both the recruitment of clathrin to membranes and the recognition of sorting signals within the cytosolic tails of transmembrane cargo molecules. The polypeptide is AP-1 complex subunit sigma-1A (AP1S1) (Homo sapiens (Human)).